The sequence spans 838 residues: Rho GTPase-activating protein 12 (838 aa).

An SH3 domain is found at 10-72; sequence AGQAYIEVEY…PAQYVKEVTR (63 aa). Composition is skewed to polar residues over residues 155–172 and 189–198; these read GKFN…QNRT and TSFSQEQSCD. A disordered region spans residues 155 to 239; the sequence is GKFNSDSHSP…PPNQGRPDSP (85 aa). S163 bears the Phosphoserine mark. Phosphoserine occurs at positions 199, 211, and 213. Phosphothreonine occurs at positions 228 and 229. Position 238 is a phosphoserine (S238). Phosphotyrosine is present on Y241. The region spanning 263-296 is the WW 1 domain; the sequence is IQVNGEWETHKDSSGRCYYYNRTTQERTWKPPRW. The span at 291–302 shows a compositional bias: basic and acidic residues; the sequence is WKPPRWARDVST. The segment at 291–346 is disordered; the sequence is WKPPRWARDVSTSRDFQSPGEQEPLSSEENYHSSCFSQSDSQCGSPPRGWSEELDE. The segment covering 303–334 has biased composition (polar residues); the sequence is SRDFQSPGEQEPLSSEENYHSSCFSQSDSQCG. The region spanning 355–388 is the WW 2 domain; that stretch reads DYTKEKWLKHVDDQGRQYYYSADGSRSEWELPKY. Positions 425–456 are disordered; the sequence is DSNDKDSPTTTKLCLPENESPPTSSKHQDPGQ. The PH domain maps to 466–567; the sequence is KITENGKKVR…WFKVLSSTIN (102 aa). A compositionally biased stretch (acidic residues) spans 572–582; it reads EADEAAEEETP. Positions 572–620 are disordered; the sequence is EADEAAEEETPDSPGVEKHDKEKDQKELKKLRSMKGSSMDSSEQKKTKK. A Phosphoserine modification is found at S584. Positions 586-601 are enriched in basic and acidic residues; sequence GVEKHDKEKDQKELKK. The Rho-GAP domain maps to 648-836; sequence SNLANLCQRE…LILLELSTVF (189 aa).

Its function is as follows. GTPase activator for the Rho-type GTPases by converting them to an inactive GDP-bound state. The polypeptide is Rho GTPase-activating protein 12 (Arhgap12) (Mus musculus (Mouse)).